We begin with the raw amino-acid sequence, 242 residues long: Ubiquinone/menaquinone biosynthesis C-methyltransferase UbiE (242 aa).

Residues threonine 69, aspartate 87, and asparagine 114 to alanine 115 each bind S-adenosyl-L-methionine.

The protein belongs to the class I-like SAM-binding methyltransferase superfamily. MenG/UbiE family.

The enzyme catalyses a 2-demethylmenaquinol + S-adenosyl-L-methionine = a menaquinol + S-adenosyl-L-homocysteine + H(+). It catalyses the reaction a 2-methoxy-6-(all-trans-polyprenyl)benzene-1,4-diol + S-adenosyl-L-methionine = a 5-methoxy-2-methyl-3-(all-trans-polyprenyl)benzene-1,4-diol + S-adenosyl-L-homocysteine + H(+). Its pathway is quinol/quinone metabolism; menaquinone biosynthesis; menaquinol from 1,4-dihydroxy-2-naphthoate: step 2/2. The protein operates within cofactor biosynthesis; ubiquinone biosynthesis. Methyltransferase required for the conversion of demethylmenaquinol (DMKH2) to menaquinol (MKH2) and the conversion of 2-polyprenyl-6-methoxy-1,4-benzoquinol (DDMQH2) to 2-polyprenyl-3-methyl-6-methoxy-1,4-benzoquinol (DMQH2). The polypeptide is Ubiquinone/menaquinone biosynthesis C-methyltransferase UbiE (Zymomonas mobilis subsp. mobilis (strain ATCC 31821 / ZM4 / CP4)).